A 471-amino-acid polypeptide reads, in one-letter code: Chromosomal replication initiator protein DnaA (471 aa).

The segment at 1 to 77 is domain I, interacts with DnaA modulators; it reads MELNSSFWTL…YTEISDTYGK (77 aa). The interval 77–130 is domain II; the sequence is KPFEVEFSITGNKINSHIETSTTPDEVLSGSEILQAQLARAQNIQPTQPRSSSD. The segment at 131 to 349 is domain III, AAA+ region; it reads TLNSELTFST…GNLKKVKMFS (219 aa). G176, G178, K179, and T180 together coordinate ATP. Residues 350-471 are domain IV, binds dsDNA; it reads ELQGLPIDHE…EQRIHNITRV (122 aa).

This sequence belongs to the DnaA family. As to quaternary structure, oligomerizes as a right-handed, spiral filament on DNA at oriC.

The protein resides in the cytoplasm. In terms of biological role, plays an essential role in the initiation and regulation of chromosomal replication. ATP-DnaA binds to the origin of replication (oriC) to initiate formation of the DNA replication initiation complex once per cell cycle. Binds the DnaA box (a 9 base pair repeat at the origin) and separates the double-stranded (ds)DNA. Forms a right-handed helical filament on oriC DNA; dsDNA binds to the exterior of the filament while single-stranded (ss)DNA is stabiized in the filament's interior. The ATP-DnaA-oriC complex binds and stabilizes one strand of the AT-rich DNA unwinding element (DUE), permitting loading of DNA polymerase. After initiation quickly degrades to an ADP-DnaA complex that is not apt for DNA replication. Binds acidic phospholipids. The sequence is that of Chromosomal replication initiator protein DnaA from Bdellovibrio bacteriovorus (strain ATCC 15356 / DSM 50701 / NCIMB 9529 / HD100).